The sequence spans 225 residues: Cytidylate kinase (225 aa).

ATP is bound at residue 12–20 (GPSGAGKGT).

Belongs to the cytidylate kinase family. Type 1 subfamily.

Its subcellular location is the cytoplasm. The enzyme catalyses CMP + ATP = CDP + ADP. The catalysed reaction is dCMP + ATP = dCDP + ADP. In Vibrio cholerae serotype O1 (strain ATCC 39315 / El Tor Inaba N16961), this protein is Cytidylate kinase.